Here is a 322-residue protein sequence, read N- to C-terminus: NAD(P)H-dependent D-xylose reductase (322 aa).

Tyr52 functions as the Proton donor in the catalytic mechanism. His114 provides a ligand contact to substrate. Residues 169-170 (SN), 218-227 (SSFGPQSFVE), and 274-284 (KSNLPERLVQN) each bind NAD(+).

This sequence belongs to the aldo/keto reductase family. In terms of assembly, homodimer.

It carries out the reaction xylitol + NAD(+) = D-xylose + NADH + H(+). The catalysed reaction is xylitol + NADP(+) = D-xylose + NADPH + H(+). Its pathway is carbohydrate metabolism; D-xylose degradation. Its function is as follows. Reduces D-xylose into xylitol. Has a preference for NADPH, but can also utilize NADH as cosubstrate. The polypeptide is NAD(P)H-dependent D-xylose reductase (XYL1) (Candida tenuis (Yeast)).